The following is a 560-amino-acid chain: Diphtheria toxin homolog CRM228 (560 aa).

Positions methionine 1 to alanine 25 are cleaved as a signal peptide. NAD(+) contacts are provided by histidine 46 and tyrosine 90. Residue glutamate 173 is part of the active site. Disulfide bonds link cysteine 211-cysteine 226 and cysteine 486-cysteine 496.

The chain is Diphtheria toxin homolog CRM228 from Corynebacterium diphtheriae.